The following is an 805-amino-acid chain: Cell division cycle protein 48 homolog (805 aa).

Residues 249–256 (GPPGSGKT) and 522–529 (GPPGCGKT) contribute to the ATP site. The disordered stretch occupies residues 783-805 (GATAAADPFATSNAAADDDDLYS).

The protein belongs to the AAA ATPase family.

Probably functions in cell division and growth processes. This chain is Cell division cycle protein 48 homolog (CAFP), found in Capsicum annuum (Capsicum pepper).